Consider the following 324-residue polypeptide: Beta-ketoacyl-[acyl-carrier-protein] synthase III (324 aa).

Residues Cys112 and His249 contribute to the active site. The interval Gln250 to Arg254 is ACP-binding. Residue Asn279 is part of the active site.

The protein belongs to the thiolase-like superfamily. FabH family. In terms of assembly, homodimer.

The protein localises to the cytoplasm. It catalyses the reaction malonyl-[ACP] + acetyl-CoA + H(+) = 3-oxobutanoyl-[ACP] + CO2 + CoA. The protein operates within lipid metabolism; fatty acid biosynthesis. Functionally, catalyzes the condensation reaction of fatty acid synthesis by the addition to an acyl acceptor of two carbons from malonyl-ACP. Catalyzes the first condensation reaction which initiates fatty acid synthesis and may therefore play a role in governing the total rate of fatty acid production. Possesses both acetoacetyl-ACP synthase and acetyl transacylase activities. Its substrate specificity determines the biosynthesis of branched-chain and/or straight-chain of fatty acids. The protein is Beta-ketoacyl-[acyl-carrier-protein] synthase III of Streptococcus pneumoniae serotype 19F (strain G54).